The primary structure comprises 607 residues: ATP-dependent rRNA helicase SPB4 (607 aa).

The Q motif motif lies at 7–35 (WDDLEYPIQPWIRSAVDVMGFENMTPVQA). Positions 38-224 (IPLFARNKDV…KTGLRNPVKV (187 aa)) constitute a Helicase ATP-binding domain. 51–58 (SVTGSGKT) serves as a coordination point for ATP. The DEAD box signature appears at 172 to 175 (DEAD). The Helicase C-terminal domain occupies 248-404 (KLEQVISIIN…EISLDIVNLP (157 aa)). The tract at residues 527–607 (KSELKKKNMS…NGMQGSFDDL (81 aa)) is disordered. Residues 529-565 (ELKKKNMSWSNNTQSKEEKVERRTKMALKRKRIEEEL) are a coiled coil. Basic and acidic residues-rich tracts occupy residues 543-552 (SKEEKVERRT) and 560-570 (RIEEELSKEAD). Residues 587-601 (ILQNKKSKNSNNGMQ) are compositionally biased toward polar residues.

It belongs to the DEAD box helicase family. DDX55/SPB4 subfamily. As to quaternary structure, component of pre-60S ribosomal complexes.

The protein resides in the nucleus. It localises to the nucleolus. The enzyme catalyses ATP + H2O = ADP + phosphate + H(+). In terms of biological role, ATP-binding RNA helicase involved in the biogenesis of 60S ribosomal subunits. Binds 90S pre-ribosomal particles and dissociates from pre-60S ribosomal particles after processing of 27SB pre-rRNA. Required for the normal formation of 18S rRNA through the processing of pre-rRNAs at sites A0, A1 and A2, and the normal formation of 25S and 5.8S rRNAs through the processing of pre-rRNAs at sites C1 and C2. This chain is ATP-dependent rRNA helicase SPB4, found in Vanderwaltozyma polyspora (strain ATCC 22028 / DSM 70294 / BCRC 21397 / CBS 2163 / NBRC 10782 / NRRL Y-8283 / UCD 57-17) (Kluyveromyces polysporus).